Here is a 335-residue protein sequence, read N- to C-terminus: Phosphate acyltransferase (335 aa).

The protein belongs to the PlsX family. As to quaternary structure, homodimer. Probably interacts with PlsY.

The protein localises to the cytoplasm. The catalysed reaction is a fatty acyl-[ACP] + phosphate = an acyl phosphate + holo-[ACP]. Its pathway is lipid metabolism; phospholipid metabolism. Functionally, catalyzes the reversible formation of acyl-phosphate (acyl-PO(4)) from acyl-[acyl-carrier-protein] (acyl-ACP). This enzyme utilizes acyl-ACP as fatty acyl donor, but not acyl-CoA. The sequence is that of Phosphate acyltransferase from Clostridium botulinum (strain Loch Maree / Type A3).